Reading from the N-terminus, the 713-residue chain is Glycine--tRNA ligase beta subunit (713 aa).

This sequence belongs to the class-II aminoacyl-tRNA synthetase family. Tetramer of two alpha and two beta subunits.

The protein localises to the cytoplasm. The enzyme catalyses tRNA(Gly) + glycine + ATP = glycyl-tRNA(Gly) + AMP + diphosphate. This Leptothrix cholodnii (strain ATCC 51168 / LMG 8142 / SP-6) (Leptothrix discophora (strain SP-6)) protein is Glycine--tRNA ligase beta subunit.